Consider the following 69-residue polypeptide: UPF0150 protein ssr1258 (69 aa).

Belongs to the UPF0150 family.

The polypeptide is UPF0150 protein ssr1258 (Synechocystis sp. (strain ATCC 27184 / PCC 6803 / Kazusa)).